Consider the following 101-residue polypeptide: Small ribosomal subunit protein uS14 (101 aa).

It belongs to the universal ribosomal protein uS14 family. As to quaternary structure, part of the 30S ribosomal subunit. Contacts proteins S3 and S10.

Binds 16S rRNA, required for the assembly of 30S particles and may also be responsible for determining the conformation of the 16S rRNA at the A site. This chain is Small ribosomal subunit protein uS14, found in Citrobacter koseri (strain ATCC BAA-895 / CDC 4225-83 / SGSC4696).